The chain runs to 158 residues: Methylated-DNA--protein-cysteine methyltransferase (158 aa).

The Nucleophile; methyl group acceptor role is filled by Cys126.

This sequence belongs to the MGMT family.

The protein localises to the cytoplasm. It catalyses the reaction a 6-O-methyl-2'-deoxyguanosine in DNA + L-cysteinyl-[protein] = S-methyl-L-cysteinyl-[protein] + a 2'-deoxyguanosine in DNA. It carries out the reaction a 4-O-methyl-thymidine in DNA + L-cysteinyl-[protein] = a thymidine in DNA + S-methyl-L-cysteinyl-[protein]. Its function is as follows. Involved in the cellular defense against the biological effects of O6-methylguanine (O6-MeG) and O4-methylthymine (O4-MeT) in DNA. Repairs the methylated nucleobase in DNA by stoichiometrically transferring the methyl group to a cysteine residue in the enzyme. This is a suicide reaction: the enzyme is irreversibly inactivated. This Methanosarcina barkeri (strain Fusaro / DSM 804) protein is Methylated-DNA--protein-cysteine methyltransferase.